The primary structure comprises 526 residues: Organic cation/carnitine transporter 4 (526 aa).

At 1–52 the chain is on the cytoplasmic side; it reads MESPEDRNGNDVRQPLLEKIPVKKEAEGEERLCIDEMLQRYCGEFGRWQLKH. A helical membrane pass occupies residues 53-73; sequence FVLTCIAWALEAFHTMVMIFA. The Extracellular segment spans residues 74-123; sequence DQEPEWRCVGSDCRVGSLNCELDPSSWEWTAGKGSSTVSEWGLICGDKYK. A helical membrane pass occupies residues 124–144; that stretch reads VGLVQALFFAGCMIGAGVFGH. Topologically, residues 145–153 are cytoplasmic; sequence LSDSKLGRK. Residues 154 to 174 traverse the membrane as a helical segment; that stretch reads GSLTVVCIINAIFGIATAFSP. Residues 175-179 are Extracellular-facing; sequence NYWTY. The helical transmembrane segment at 180–200 threads the bilayer; the sequence is VVLRFLTGFSTGGVGLTAFVL. Residue 201-208 participates in ATP binding; sequence ATEPIGPS. Over 201–214 the chain is Cytoplasmic; the sequence is ATEPIGPSKRGVAG. The chain crosses the membrane as a helical span at residues 215 to 235; the sequence is MSTFYFFSAGIAVLSGIAYVF. Topologically, residues 236–240 are extracellular; that stretch reads RSWRE. The helical transmembrane segment at 241–261 threads the bilayer; the sequence is LFIVSSLPSLLFLLIVIPFIS. The Cytoplasmic portion of the chain corresponds to 262–331; it reads ESPRWYLVRG…ILSPLMRMRL (70 aa). A helical membrane pass occupies residues 332–352; that stretch reads VISVAISFTVSIVYYGLSLNV. Residues 353-360 are Extracellular-facing; sequence GNLKTNLY. A helical transmembrane segment spans residues 361–381; that stretch reads LNVFVNAVSEMPAFAITAVLL. Over 382–390 the chain is Cytoplasmic; the sequence is DKYGRKPLS. Residues 391–411 form a helical membrane-spanning segment; sequence IGTQWFSCVFCLVGFSVWGAG. Residues 412 to 418 lie on the Extracellular side of the membrane; sequence PWKSVRM. A helical transmembrane segment spans residues 419–439; it reads VSGVLGIFGMAGTYNLLFIYI. The Cytoplasmic segment spans residues 440 to 451; it reads AELFPTVVRNAA. A helical membrane pass occupies residues 452–472; sequence LGCATQAAQMGAILAPFVVVL. Over 473–475 the chain is Extracellular; that stretch reads GEE. Residues 476 to 496 traverse the membrane as a helical segment; that stretch reads LPFGVFAVCGLVGGGLAFYLP. Residues 497–526 lie on the Cytoplasmic side of the membrane; that stretch reads ETLNKPLYDTMFGMHEAESESNRERGEVIC.

Belongs to the major facilitator (TC 2.A.1) superfamily. Organic cation transporter (TC 2.A.1.19) family. Mostly expressed in siliques, and, to a lower extent, in stems, leaves, flowers and siliques. Present in pollen. In the stems of secondary inflorescences present in the phloem cells and xylem parenchyma cells.

The protein resides in the vacuole membrane. Its function is as follows. High affinity carnitine transporter involved in the active cellular uptake of carnitine. Also transports organic cations. This Arabidopsis thaliana (Mouse-ear cress) protein is Organic cation/carnitine transporter 4 (OCT4).